A 242-amino-acid polypeptide reads, in one-letter code: U1 small nuclear ribonucleoprotein C (242 aa).

The Matrin-type; degenerate zinc-finger motif lies at 3-35 (YLGDYCDVYLTHDSMSVRKAHNSGRNHLRNVVE). Residues 60–242 (GQASSNPMLQ…SSPGPSQEGK (183 aa)) are disordered. 4 stretches are compositionally biased toward pro residues: residues 90–107 (MLPP…PGAP), 136–149 (PPMP…PLPN), 156–183 (PFPP…PPIP), and 201–213 (PVPP…PGAP). The span at 231–242 (PASSPGPSQEGK) shows a compositional bias: polar residues.

This sequence belongs to the U1 small nuclear ribonucleoprotein C family. In terms of assembly, U1 snRNP is composed of the 7 core Sm proteins B/B', D1, D2, D3, E, F and G that assemble in a heptameric protein ring on the Sm site of the small nuclear RNA to form the core snRNP, and at least 3 U1 snRNP-specific proteins U1-70K, U1-A and U1-C. U1-C interacts with U1 snRNA and the 5' splice-site region of the pre-mRNA.

It is found in the nucleus. In terms of biological role, component of the spliceosomal U1 snRNP, which is essential for recognition of the pre-mRNA 5' splice-site and the subsequent assembly of the spliceosome. U1-C is directly involved in initial 5' splice-site recognition for both constitutive and regulated alternative splicing. The interaction with the 5' splice-site seems to precede base-pairing between the pre-mRNA and the U1 snRNA. Stimulates commitment or early (E) complex formation by stabilizing the base pairing of the 5' end of the U1 snRNA and the 5' splice-site region. The polypeptide is U1 small nuclear ribonucleoprotein C (Ajellomyces capsulatus (strain G186AR / H82 / ATCC MYA-2454 / RMSCC 2432) (Darling's disease fungus)).